Consider the following 382-residue polypeptide: MLEFEMDMDQLAQIKVIGVGGGGSNAVNRMIENGLQGVDFISVNTDAQALHLSKAEVKLQLGGKLTRGLGAGANPEIGKKAAEESREQIEEALQGADMVFITAGMGGGTGTGAAPVIAEVAKEIGALTVGVVTRPFTFEGRKRSTQAAAGIAALKEKVDTLIVIPNDRLLEIVDKNTPMLEAFREADNVLRQGVQGISDLIATPGLINLDFADVKTIMKDKGSALMGIGIATGENRAGEAAKKAISSPLLETSLDGAQGVLMNITGGSNLSLYEVHEAAEIVSAASDAEVNMIFGSVINEDLKDEIVVTVIATGFDDAENRRAQQQSNFNRQAAPKQPLKSKEKEAEKKEPRFTSQPEADDNESLDTLDIPAFLRNRRRKSR.

GTP contacts are provided by residues 21 to 25 (GGGSN), 108 to 110 (GTG), E139, R143, and D187. The tract at residues 322–382 (RAQQQSNFNR…FLRNRRRKSR (61 aa)) is disordered. Over residues 340-352 (KSKEKEAEKKEPR) the composition is skewed to basic and acidic residues.

This sequence belongs to the FtsZ family. As to quaternary structure, homodimer. Polymerizes to form a dynamic ring structure in a strictly GTP-dependent manner. Interacts directly with several other division proteins.

Its subcellular location is the cytoplasm. Its function is as follows. Essential cell division protein that forms a contractile ring structure (Z ring) at the future cell division site. The regulation of the ring assembly controls the timing and the location of cell division. One of the functions of the FtsZ ring is to recruit other cell division proteins to the septum to produce a new cell wall between the dividing cells. Binds GTP and shows GTPase activity. This chain is Cell division protein FtsZ, found in Halalkalibacterium halodurans (strain ATCC BAA-125 / DSM 18197 / FERM 7344 / JCM 9153 / C-125) (Bacillus halodurans).